The following is a 312-amino-acid chain: MIEFEKPIITKIDENKDYGRFVIEPLERGYGTTLGNSLRRVLLSSLPGAAVTSIKIDGVLHEFDTIPGVREDVMQIILNVKGLAVKSYVEDEKIIELEVEGPAEVTAGDILTDSDIELVNPDHYLFTIAEGHSLRATMTVAKKRGYVPAEGNKKDDAPVGTLAVDSIYTPVKKVNYQVEPARVGSNDGFDKLTIEIMTNGTIIPEDALGLSARVLIEHLNLFTDLTEVAKSTEVMKETEKVNDEKVLDRTIEELDLSVRSYNCLKRAGINTVFDLTEKSEPEMMKVRNLGRKSLEEVKVKLADLGLGLKNDK.

The interval 1–226 (MIEFEKPIIT…EHLNLFTDLT (226 aa)) is alpha N-terminal domain (alpha-NTD). The tract at residues 243–312 (DEKVLDRTIE…DLGLGLKNDK (70 aa)) is alpha C-terminal domain (alpha-CTD).

It belongs to the RNA polymerase alpha chain family. Homodimer. The RNAP catalytic core consists of 2 alpha, 1 beta, 1 beta' and 1 omega subunit. When a sigma factor is associated with the core the holoenzyme is formed, which can initiate transcription.

It carries out the reaction RNA(n) + a ribonucleoside 5'-triphosphate = RNA(n+1) + diphosphate. In terms of biological role, DNA-dependent RNA polymerase catalyzes the transcription of DNA into RNA using the four ribonucleoside triphosphates as substrates. The protein is DNA-directed RNA polymerase subunit alpha of Streptococcus pyogenes serotype M3 (strain ATCC BAA-595 / MGAS315).